The chain runs to 197 residues: Beta-crystallin A2 (197 aa).

The segment at 1-11 (MSSAPAPGSAP) is N-terminal arm. Beta/gamma crystallin 'Greek key' domains follow at residues 12–52 (VCLT…KVEN) and 53–99 (GAWV…RPVL). The segment at 100-105 (CANHSD) is connecting peptide. Beta/gamma crystallin 'Greek key' domains lie at 106–147 (SRVT…KVSS) and 148–196 (GAWV…RRVQ).

It belongs to the beta/gamma-crystallin family. In terms of assembly, homo/heterodimer, or complexes of higher-order. The structure of beta-crystallin oligomers seems to be stabilized through interactions between the N-terminal arms.

Functionally, crystallins are the dominant structural components of the vertebrate eye lens. The chain is Beta-crystallin A2 (Cryba2) from Mus musculus (Mouse).